A 290-amino-acid chain; its full sequence is 33 kDa chaperonin (290 aa).

Cystine bridges form between C236/C238 and C269/C272.

The protein belongs to the HSP33 family. In terms of processing, under oxidizing conditions two disulfide bonds are formed involving the reactive cysteines. Under reducing conditions zinc is bound to the reactive cysteines and the protein is inactive.

It is found in the cytoplasm. Its function is as follows. Redox regulated molecular chaperone. Protects both thermally unfolding and oxidatively damaged proteins from irreversible aggregation. Plays an important role in the bacterial defense system toward oxidative stress. The protein is 33 kDa chaperonin of Brevibacillus brevis (strain 47 / JCM 6285 / NBRC 100599).